The primary structure comprises 407 residues: M protein, serotype 2.1 (407 aa).

The N-terminal stretch at 1 to 41 (MARKDTNKQYSLRKLKTGTASVAVAVAVLGAGFANQTTVKA) is a signal peptide. The interval 81–94 (VEEEHKKVEEEHKK) is 2 X 7 AA tandem repeats. Composition is skewed to basic and acidic residues over residues 83 to 144 (EEHK…KRYQ), 152 to 229 (QLEK…EKQI), 237 to 264 (LSRD…EKQI), and 272 to 288 (LSRD…KVEA). Residues 83–289 (EEHKKVEEEH…REAKKKVEAD (207 aa)) are disordered. 4 C repeats span residues 151-185 (QQLE…EAEH), 186-220 (QKLK…EAEH), 221-255 (QKLK…EAEH), and 256-290 (QKLK…EADL). D repeat units lie at residues 323–328 (AKLEAE), 329–334 (AKALKE), 337–342 (AKQAEE), and 344–349 (AKLKGN). Residues 344–382 (AKLKGNQTPNAKVAPQANRSRSAMTQQKRTLPSTGETAN) are disordered. Residues 360–380 (ANRSRSAMTQQKRTLPSTGET) are compositionally biased toward polar residues. The LPXTG sorting signal signature appears at 374 to 378 (LPSTG). Threonine 377 carries the post-translational modification Pentaglycyl murein peptidoglycan amidated threonine. The propeptide at 378-407 (GETANPFFTAAAATVMVSAGMLALKRKEEN) is removed by sortase.

The protein belongs to the M protein family.

The protein resides in the secreted. The protein localises to the cell wall. This protein is one of the different antigenic serotypes of protein M. Protein M is closely associated with virulence of the bacterium and can render the organism resistant to phagocytosis. The polypeptide is M protein, serotype 2.1 (emmL2.1) (Streptococcus pyogenes).